The primary structure comprises 348 residues: Cuticle collagen rol-6 (348 aa).

Residues glycine 76–leucine 348 form a disordered region. Positions proline 120–glycine 137 are enriched in gly residues. 4 triple-helical region regions span residues glycine 152 to aspartate 178, glycine 196 to arginine 258, glycine 261 to aspartate 284, and glycine 288 to aspartate 323. Low complexity predominate over residues proline 194–proline 231. Gly residues predominate over residues glycine 297–glycine 306. Residues lysine 322–arginine 338 are compositionally biased toward basic and acidic residues. The segment covering serine 339 to leucine 348 has biased composition (basic residues).

This sequence belongs to the cuticular collagen family. As to quaternary structure, collagen polypeptide chains are complexed within the cuticle by disulfide bonds and other types of covalent cross-links. As to expression, localizes in stripes along the alae.

In terms of biological role, nematode cuticles are composed largely of collagen-like proteins. The cuticle functions both as an exoskeleton and as a barrier to protect the worm from its environment. May play a role in cuticle remodeling in response to the environment. Involved in body morphogenesis. In Caenorhabditis elegans, this protein is Cuticle collagen rol-6 (rol-6).